The following is a 151-amino-acid chain: D-aminoacyl-tRNA deacylase (151 aa).

The Gly-cisPro motif, important for rejection of L-amino acids motif lies at 142–143 (GP).

Belongs to the DTD family. As to quaternary structure, homodimer.

The protein resides in the cytoplasm. The catalysed reaction is glycyl-tRNA(Ala) + H2O = tRNA(Ala) + glycine + H(+). It carries out the reaction a D-aminoacyl-tRNA + H2O = a tRNA + a D-alpha-amino acid + H(+). Its function is as follows. An aminoacyl-tRNA editing enzyme that deacylates mischarged D-aminoacyl-tRNAs. Also deacylates mischarged glycyl-tRNA(Ala), protecting cells against glycine mischarging by AlaRS. Acts via tRNA-based rather than protein-based catalysis; rejects L-amino acids rather than detecting D-amino acids in the active site. By recycling D-aminoacyl-tRNA to D-amino acids and free tRNA molecules, this enzyme counteracts the toxicity associated with the formation of D-aminoacyl-tRNA entities in vivo and helps enforce protein L-homochirality. The chain is D-aminoacyl-tRNA deacylase from Psychrobacter cryohalolentis (strain ATCC BAA-1226 / DSM 17306 / VKM B-2378 / K5).